Reading from the N-terminus, the 169-residue chain is Regulator of ribonuclease activity A (169 aa).

It belongs to the RraA family. As to quaternary structure, homotrimer. Binds to both RNA-binding sites in the C-terminal region of Rne and to RhlB.

The protein localises to the cytoplasm. Its function is as follows. Globally modulates RNA abundance by binding to RNase E (Rne) and regulating its endonucleolytic activity. Can modulate Rne action in a substrate-dependent manner by altering the composition of the degradosome. Modulates RNA-binding and helicase activities of the degradosome. This is Regulator of ribonuclease activity A from Photorhabdus laumondii subsp. laumondii (strain DSM 15139 / CIP 105565 / TT01) (Photorhabdus luminescens subsp. laumondii).